The primary structure comprises 423 residues: tRNA(Ile)-lysidine synthase (423 aa).

29 to 34 (SGGKDS) contributes to the ATP binding site.

Belongs to the tRNA(Ile)-lysidine synthase family.

The protein localises to the cytoplasm. The enzyme catalyses cytidine(34) in tRNA(Ile2) + L-lysine + ATP = lysidine(34) in tRNA(Ile2) + AMP + diphosphate + H(+). Ligates lysine onto the cytidine present at position 34 of the AUA codon-specific tRNA(Ile) that contains the anticodon CAU, in an ATP-dependent manner. Cytidine is converted to lysidine, thus changing the amino acid specificity of the tRNA from methionine to isoleucine. In Lactococcus lactis subsp. lactis (strain IL1403) (Streptococcus lactis), this protein is tRNA(Ile)-lysidine synthase.